Consider the following 345-residue polypeptide: Galacturonate transporter (345 aa).

A signal peptide spans 1–32 (MFKIKGLRWYMIGLVTIGTVLGYLTRNAIAAA). Transmembrane regions (helical) follow at residues 49–69 (YIIA…GYVL), 76–96 (VGYA…ALAN), 100–120 (GLAV…PAGL), 139–159 (FNVG…WAIM), 165–185 (MAFL…LYFY), 237–257 (FLAE…MFKA), 265–285 (IAMF…LGGY), and 304–324 (LVVT…LFTS).

It belongs to the major facilitator superfamily. Phthalate permease family.

The protein localises to the cell inner membrane. It catalyses the reaction aldehydo-D-galacturonate(out) + H(+)(out) = aldehydo-D-galacturonate(in) + H(+)(in). Its activity is regulated as follows. Inhibited by cyanide and 2,4-dinitrophenol, but not by arsenate. Functionally, transport of D-galacturonate. Cannot transport the dimer digalacturonic acid. Uptake is an active process. The chain is Galacturonate transporter from Dickeya chrysanthemi (Pectobacterium chrysanthemi).